The chain runs to 337 residues: Succinylglutamate desuccinylase (337 aa).

Zn(2+) contacts are provided by H59, E62, and H152. Residue E216 is part of the active site.

This sequence belongs to the AspA/AstE family. Succinylglutamate desuccinylase subfamily. It depends on Zn(2+) as a cofactor.

The enzyme catalyses N-succinyl-L-glutamate + H2O = L-glutamate + succinate. It participates in amino-acid degradation; L-arginine degradation via AST pathway; L-glutamate and succinate from L-arginine: step 5/5. Functionally, transforms N(2)-succinylglutamate into succinate and glutamate. This is Succinylglutamate desuccinylase from Ectopseudomonas mendocina (strain ymp) (Pseudomonas mendocina).